Here is a 599-residue protein sequence, read N- to C-terminus: Dehydrogenase eriK (599 aa).

An N-terminal signal peptide occupies residues 1–20; that stretch reads MAFLKARLAALLSVAVSCSA. FAD-binding positions include 43–44 and 64–65; these read TA and EG. A glycan (N-linked (GlcNAc...) asparagine) is linked at Asn-93. An FAD-binding site is contributed by 122–125; that stretch reads NGMY. Residues Asn-169, Asn-191, Asn-234, Asn-260, Asn-284, Asn-319, Asn-339, Asn-353, Asn-365, Asn-370, Asn-398, Asn-456, and Asn-518 are each glycosylated (N-linked (GlcNAc...) asparagine). Residues Ala-569 and 580 to 581 contribute to the FAD site; that span reads TQ.

This sequence belongs to the GMC oxidoreductase family. As to quaternary structure, homodimer. Requires FAD as cofactor.

In terms of biological role, dehydrogenase; part of the gene cluster that mediates the biosynthesis of erinacines, cyathane-xylosides that show unique biological activities, including leishmanicidal activity, stimulating activity for nerve growth-factor synthesis, and agonistic activity toward the kappa opioid receptor. The role of the dehydrogenase eriK within the pathway has still to be determined. The first step of the erinacines biosynthesis pathway is catalyzed by the geranylgeranyl diphosphate (GGPP) synthase eriE via conversion of farnesyl pyrophosphate and isopentyl pyrophosphate into geranylgeranyl pyrophosphate (GGPP). GGPP is then substrate of the diterpene cyclase eriG for the production of cyatha-3,12-diene. The cytochrome P450 monooxygenase eriI then hydroxylates cyatha-3,12-diene at C-14 of the seven-membered ring to produce erinacol, which is further hydroxylated at C-15 by the cytochrome P450 monooxygenase eriC to yield cyathadiol. The cytochrome P450 monooxygenase eriA then catalyzes C-11 hydroxylation in the presence of the short chain dehydrogenase/reductase (SDR) eriH, which leads to the production of cyathatriol. The acetyltransferase eriL converts cyathatriol into 11-O-acetyl-cyathatriol. The SDR eriH catalyzes further oxidation of 11-O-acetyl-cyathatriol into 1-O-acetylcyathin A3. Finally, the glycosyl transferase eriJ tranfers xylose from UDP-xylose onto C-14 of 11-O-acetyl-cyathatriol to form eracine Q. EriJ is also able to convert 11-O-acetyl-cyathatriol to eracine Q2 by using UDP-D-glucose as cosubstrate, but at a lower rate. In Hericium erinaceus (Lion's mane mushroom), this protein is Dehydrogenase eriK.